We begin with the raw amino-acid sequence, 303 residues long: Ferrochelatase (303 aa).

Residues His-185 and Glu-262 each coordinate Fe cation.

This sequence belongs to the ferrochelatase family.

It is found in the cytoplasm. It carries out the reaction heme b + 2 H(+) = protoporphyrin IX + Fe(2+). It functions in the pathway porphyrin-containing compound metabolism; protoheme biosynthesis; protoheme from protoporphyrin-IX: step 1/1. Catalyzes the ferrous insertion into protoporphyrin IX. The chain is Ferrochelatase from Campylobacter jejuni (strain RM1221).